Reading from the N-terminus, the 273-residue chain is NADPH-dependent 7-cyano-7-deazaguanine reductase (273 aa).

Substrate is bound at residue 80 to 82 (VES). Residue 82 to 83 (SK) participates in NADPH binding. The active-site Thioimide intermediate is the cysteine 180. Aspartate 187 acts as the Proton donor in catalysis. 219–220 (HE) contacts substrate. 248–249 (RG) is a binding site for NADPH.

This sequence belongs to the GTP cyclohydrolase I family. QueF type 2 subfamily. In terms of assembly, homodimer.

It is found in the cytoplasm. The enzyme catalyses 7-aminomethyl-7-carbaguanine + 2 NADP(+) = 7-cyano-7-deazaguanine + 2 NADPH + 3 H(+). It participates in tRNA modification; tRNA-queuosine biosynthesis. Its function is as follows. Catalyzes the NADPH-dependent reduction of 7-cyano-7-deazaguanine (preQ0) to 7-aminomethyl-7-deazaguanine (preQ1). The sequence is that of NADPH-dependent 7-cyano-7-deazaguanine reductase from Bordetella pertussis (strain Tohama I / ATCC BAA-589 / NCTC 13251).